Here is a 493-residue protein sequence, read N- to C-terminus: Transcript termination protein A18 (493 aa).

Residues 100–256 (MIELKRPLYI…NSIINIAKLS (157 aa)) form the Helicase ATP-binding domain. ATP is bound at residue 113–120 (LACGFGKT). Residues 206 to 209 (DESH) carry the DESH box motif.

It belongs to the helicase family. Poxviruses subfamily. Interacts with G2. Might be part of a transcription complex composed at least of G2, A18, and H5.

The protein resides in the virion. Its function is as follows. DNA helicase which seems to act as a postreplicative transcription termination factor. Involved in ATP-dependent release of nascent RNA. Forms a stable complex with single-stranded DNA, and to a lesser extent RNA. This chain is Transcript termination protein A18, found in Camelus.